The following is a 144-amino-acid chain: Large ribosomal subunit protein uL15 (144 aa).

The disordered stretch occupies residues 1–52 (MRLNTLSPANGARHSRKRLGRGIGSGFGKTSGRGHKGQKSRSGSSIRRGFEG). Gly residues predominate over residues 21–31 (RGIGSGFGKTS).

Belongs to the universal ribosomal protein uL15 family. Part of the 50S ribosomal subunit.

Binds to the 23S rRNA. The sequence is that of Large ribosomal subunit protein uL15 from Buchnera aphidicola subsp. Acyrthosiphon pisum (strain 5A).